The following is a 252-amino-acid chain: Phosphoglycolate phosphatase (252 aa).

The active-site Nucleophile is the aspartate 13. Aspartate 13, aspartate 15, and aspartate 192 together coordinate Mg(2+).

It belongs to the HAD-like hydrolase superfamily. CbbY/CbbZ/Gph/YieH family. In terms of assembly, monomer. Mg(2+) is required as a cofactor. It depends on chloride as a cofactor.

The catalysed reaction is 2-phosphoglycolate + H2O = glycolate + phosphate. It participates in organic acid metabolism; glycolate biosynthesis; glycolate from 2-phosphoglycolate: step 1/1. Its function is as follows. Specifically catalyzes the dephosphorylation of 2-phosphoglycolate. Is involved in the dissimilation of the intracellular 2-phosphoglycolate formed during the DNA repair of 3'-phosphoglycolate ends, a major class of DNA lesions induced by oxidative stress. This Salmonella typhi protein is Phosphoglycolate phosphatase.